Here is a 692-residue protein sequence, read N- to C-terminus: Elongation factor G (692 aa).

Positions 8–283 constitute a tr-type G domain; that stretch reads NRIRNIGIAA…AVIDYLPAPT (276 aa). Residues 17–24, 81–85, and 135–138 contribute to the GTP site; these read AHIDAGKT, DTPGH, and NKMD.

The protein belongs to the TRAFAC class translation factor GTPase superfamily. Classic translation factor GTPase family. EF-G/EF-2 subfamily.

The protein localises to the cytoplasm. Catalyzes the GTP-dependent ribosomal translocation step during translation elongation. During this step, the ribosome changes from the pre-translocational (PRE) to the post-translocational (POST) state as the newly formed A-site-bound peptidyl-tRNA and P-site-bound deacylated tRNA move to the P and E sites, respectively. Catalyzes the coordinated movement of the two tRNA molecules, the mRNA and conformational changes in the ribosome. This Helicobacter pylori (strain G27) protein is Elongation factor G.